The primary structure comprises 242 residues: Mannosyl-3-phosphoglycerate phosphatase (242 aa).

D8 functions as the Nucleophile in the catalytic mechanism. Residues D8, D10, S169, and D204 each contribute to the Mg(2+) site.

This sequence belongs to the HAD-like hydrolase superfamily. MPGP family. Mg(2+) serves as cofactor.

It is found in the cytoplasm. It carries out the reaction 2-O-(alpha-D-mannosyl)-3-phosphoglycerate + H2O = (2R)-2-O-(alpha-D-mannosyl)-glycerate + phosphate. The protein operates within carbohydrate biosynthesis; 2-(alpha-D-mannosyl)-D-glycerate biosynthesis; 2-(alpha-D-mannosyl)-D-glycerate from GDP-alpha-D-mannose (MPG route): step 2/2. Hydrolyzes mannosyl-3-phosphoglycerate (MPG) to form the osmolyte mannosylglycerate (MG). This is Mannosyl-3-phosphoglycerate phosphatase from Pyrococcus furiosus (strain ATCC 43587 / DSM 3638 / JCM 8422 / Vc1).